The chain runs to 227 residues: NADH-quinone oxidoreductase subunit C (227 aa).

It belongs to the complex I 30 kDa subunit family. In terms of assembly, NDH-1 is composed of 14 different subunits. Subunits NuoB, C, D, E, F, and G constitute the peripheral sector of the complex.

The protein localises to the cell inner membrane. The catalysed reaction is a quinone + NADH + 5 H(+)(in) = a quinol + NAD(+) + 4 H(+)(out). Its function is as follows. NDH-1 shuttles electrons from NADH, via FMN and iron-sulfur (Fe-S) centers, to quinones in the respiratory chain. The immediate electron acceptor for the enzyme in this species is believed to be ubiquinone. Couples the redox reaction to proton translocation (for every two electrons transferred, four hydrogen ions are translocated across the cytoplasmic membrane), and thus conserves the redox energy in a proton gradient. This is NADH-quinone oxidoreductase subunit C from Coxiella burnetii (strain Dugway 5J108-111).